The sequence spans 181 residues: ADP-ribosylation factor-like protein 1 (181 aa).

The N-myristoyl glycine moiety is linked to residue Gly2. Residues 24-31, 45-48, Gly70, 126-129, and 160-161 contribute to the GTP site; these read GLDGAGKT, TIPT, NKQD, and AT. The Mg(2+) site is built by Thr31 and Thr48.

The protein belongs to the small GTPase superfamily. Arf family. The GTP-bound form interacts with GOLGA1. The GTP-bound form interacts with GOLGA4 and RGPD8. The GTP-bound form directly interacts with ARFIP2. Binds to SCOC, preferentially in its GTP-bound form. May interact with UNC119. Interacts with ARFIP1; this interaction directs ARFIP1 to the trans-Golgi membranes. Interacts with ARFGEF1 (via N-terminus). As to expression, detected in heart, liver, lung and liver (at protein level). Detected in fetal heart, lung, liver and kidney. Detected in adult heart, placenta, lung, liver, skeletal muscle, kidney and pancreas.

It is found in the golgi apparatus membrane. The protein localises to the golgi apparatus. Its subcellular location is the trans-Golgi network membrane. It localises to the membrane. Its function is as follows. GTP-binding protein that recruits several effectors, such as golgins, arfaptins and Arf-GEFs to the trans-Golgi network, and modulates their functions at the Golgi complex. Plays thereby a role in a wide range of fundamental cellular processes, including cell polarity, innate immunity, or protein secretion mediated by arfaptins, which were shown to play a role in maintaining insulin secretion from pancreatic beta cells. The sequence is that of ADP-ribosylation factor-like protein 1 (ARL1) from Homo sapiens (Human).